Consider the following 231-residue polypeptide: tRNA (guanine-N(7)-)-methyltransferase (231 aa).

Positions 62, 87, 114, and 136 each coordinate S-adenosyl-L-methionine. D136 is an active-site residue. Residues K140, D172, and 210-213 (TRYE) each bind substrate.

The protein belongs to the class I-like SAM-binding methyltransferase superfamily. TrmB family.

The catalysed reaction is guanosine(46) in tRNA + S-adenosyl-L-methionine = N(7)-methylguanosine(46) in tRNA + S-adenosyl-L-homocysteine. The protein operates within tRNA modification; N(7)-methylguanine-tRNA biosynthesis. Functionally, catalyzes the formation of N(7)-methylguanine at position 46 (m7G46) in tRNA. This chain is tRNA (guanine-N(7)-)-methyltransferase, found in Zymomonas mobilis subsp. mobilis (strain ATCC 31821 / ZM4 / CP4).